Reading from the N-terminus, the 318-residue chain is Transaldolase (318 aa).

K126 acts as the Schiff-base intermediate with substrate in catalysis.

It belongs to the transaldolase family. Type 1 subfamily. Homodimer.

The protein localises to the cytoplasm. It carries out the reaction D-sedoheptulose 7-phosphate + D-glyceraldehyde 3-phosphate = D-erythrose 4-phosphate + beta-D-fructose 6-phosphate. Its pathway is carbohydrate degradation; pentose phosphate pathway; D-glyceraldehyde 3-phosphate and beta-D-fructose 6-phosphate from D-ribose 5-phosphate and D-xylulose 5-phosphate (non-oxidative stage): step 2/3. Its function is as follows. Transaldolase is important for the balance of metabolites in the pentose-phosphate pathway. This Cupriavidus metallidurans (strain ATCC 43123 / DSM 2839 / NBRC 102507 / CH34) (Ralstonia metallidurans) protein is Transaldolase.